Reading from the N-terminus, the 267-residue chain is Heme-containing CO-sensing transcriptional regulator RcoM 2 (267 aa).

The PAS domain maps to 15-86; it reads RAETFQHKLE…KSRDKLRFLL (72 aa). Histidine 74 and methionine 104 together coordinate heme. Positions 161 to 266 constitute an HTH LytTR-type domain; it reads IPVYRKSRVI…TAQLKELLGV (106 aa).

Heme is required as a cofactor.

The protein resides in the cytoplasm. In terms of biological role, one-component, b-type heme-containing aerobic sensor and transcriptional regulator that responds to CO by activating the expression of the oxidation operon cox. The protein is Heme-containing CO-sensing transcriptional regulator RcoM 2 (rcoM2) of Paraburkholderia xenovorans (strain LB400).